We begin with the raw amino-acid sequence, 358 residues long: Low-specificity L-threonine aldolase 1 (358 aa).

Lys-207 carries the post-translational modification N6-(pyridoxal phosphate)lysine.

It belongs to the threonine aldolase family. Pyridoxal 5'-phosphate is required as a cofactor. In terms of tissue distribution, expressed in root tips, seedlings, carpels and seeds.

The catalysed reaction is L-threonine = acetaldehyde + glycine. It catalyses the reaction L-allo-threonine = acetaldehyde + glycine. It participates in amino-acid degradation; L-threonine degradation via aldolase pathway; acetaldehyde and glycine from L-threonine: step 1/1. Its function is as follows. Threonine aldolase involved in threonine degradation to glycine. May play a role in the removal of L-allo-threonine. The sequence is that of Low-specificity L-threonine aldolase 1 from Arabidopsis thaliana (Mouse-ear cress).